The chain runs to 175 residues: Cytochrome c-550-like protein (175 aa).

A signal peptide spans 1–34 (MYQPHFWQRSIGWLCGGLLILLLGWTIAPATALA). The heme c site is built by Cys-81, Cys-84, His-85, and Cys-135.

The protein belongs to the cytochrome c family. PsbV subfamily. Heme c serves as cofactor.

The protein resides in the cellular thylakoid membrane. In terms of biological role, probable low-potential cytochrome c, can partially replace cytochrome c-550 (PsbV) function. This Thermosynechococcus vestitus (strain NIES-2133 / IAM M-273 / BP-1) protein is Cytochrome c-550-like protein.